We begin with the raw amino-acid sequence, 311 residues long: Ribosomal RNA small subunit methyltransferase H (311 aa).

S-adenosyl-L-methionine contacts are provided by residues 32-34 (AGH), Asp52, Phe79, Asp100, and Gln107.

It belongs to the methyltransferase superfamily. RsmH family.

The protein localises to the cytoplasm. It carries out the reaction cytidine(1402) in 16S rRNA + S-adenosyl-L-methionine = N(4)-methylcytidine(1402) in 16S rRNA + S-adenosyl-L-homocysteine + H(+). Functionally, specifically methylates the N4 position of cytidine in position 1402 (C1402) of 16S rRNA. The sequence is that of Ribosomal RNA small subunit methyltransferase H from Staphylococcus aureus (strain COL).